We begin with the raw amino-acid sequence, 340 residues long: Mitochondrial amidoxime-reducing component 1 (340 aa).

Residue Gly-2 is the site of N-myristoyl glycine attachment. Residues 2 to 24 are Mitochondrial matrix-facing; the sequence is GAGSWALTLFGFSAFRVPGQPRS. The chain crosses the membrane as a helical; Signal-anchor for type II membrane protein span at residues 25 to 44; the sequence is TWLGVAALGLAAVALGTVAW. Over 45 to 340 the chain is Cytoplasmic; it reads RRARPRRRRR…VGDPVYLLGQ (296 aa). Residues Lys-70, Ser-71, and Arg-95 each contribute to the Mo-molybdopterin site. The tract at residues 96 to 186 is MOSC N-terminal region; it reads FWLVINEEGN…KMQSCRLVHF (91 aa). The region spanning 191 to 338 is the MOSC domain; that stretch reads RPRSSRQMKA…IRVGDPVYLL (148 aa). Positions 214, 241, 243, 274, 275, 276, and 320 each coordinate Mo-molybdopterin.

In terms of assembly, component of a complex composed of cytochrome b5, NADH-cytochrome b5 reductase and MTARC1. The cofactor is Mo-molybdopterin.

Its subcellular location is the mitochondrion outer membrane. It localises to the membrane. The enzyme catalyses N(omega)-hydroxy-L-arginine + 2 Fe(II)-[cytochrome b5] + 2 H(+) = L-arginine + 2 Fe(III)-[cytochrome b5] + H2O. Its function is as follows. Catalyzes the reduction of N-oxygenated molecules, acting as a counterpart of cytochrome P450 and flavin-containing monooxygenases in metabolic cycles. As a component of prodrug-converting system, reduces a multitude of N-hydroxylated prodrugs particularly amidoximes, leading to increased drug bioavailability. May be involved in mitochondrial N(omega)-hydroxy-L-arginine (NOHA) reduction, regulating endogenous nitric oxide levels and biosynthesis. Postulated to cleave the N-OH bond of N-hydroxylated substrates in concert with electron transfer from NADH to cytochrome b5 reductase then to cytochrome b5, the ultimate electron donor that primes the active site for substrate reduction. The chain is Mitochondrial amidoxime-reducing component 1 (Mtarc1) from Mus musculus (Mouse).